A 102-amino-acid chain; its full sequence is Ferredoxin-thioredoxin reductase, catalytic chain (102 aa).

Cys53 provides a ligand contact to [4Fe-4S] cluster. The active-site Nucleophile is Cys55. The cysteines at positions 55 and 85 are disulfide-linked. Positions 72, 74, and 83 each coordinate [4Fe-4S] cluster.

The protein belongs to the ferredoxin thioredoxin reductase beta subunit family. As to quaternary structure, heterodimer of subunit A (variable subunit) and subunit B (catalytic subunit). Heterodimeric FTR forms a complex with ferredoxin and thioredoxin. The cofactor is [4Fe-4S] cluster.

It localises to the plastid. The protein resides in the chloroplast. The catalysed reaction is [thioredoxin]-disulfide + 2 reduced [2Fe-2S]-[ferredoxin] + 2 H(+) = [thioredoxin]-dithiol + 2 oxidized [2Fe-2S]-[ferredoxin]. Catalytic subunit of the ferredoxin-thioredoxin reductase (FTR), which catalyzes the two-electron reduction of thioredoxins by the electrons provided by reduced ferredoxin. The sequence is that of Ferredoxin-thioredoxin reductase, catalytic chain (ftrB) from Guillardia theta (Cryptophyte).